The primary structure comprises 396 residues: Actin-related protein 6 (396 aa).

The residue at position 2 (T2) is an N-acetylthreonine. Position 260 is an N6-acetyllysine (K260).

The protein belongs to the actin family. ARP6 subfamily. As to quaternary structure, component of the chromatin-remodeling SRCAP complex composed of at least SRCAP, DMAP1, RUVBL1, RUVBL2, ACTL6A, YEATS4, ACTR6 and ZNHIT1. Interacts with CBX1, CBX3 and CBX5.

The protein localises to the cytoplasm. It is found in the cytoskeleton. Its subcellular location is the nucleus. The protein resides in the nucleolus. In terms of biological role, required for formation and/or maintenance of proper nucleolar structure and function. Plays a dual role in the regulation of ribosomal DNA (rDNA) transcription. In the presence of high glucose, maintains active rDNA transcription through H2A.Z deposition and under glucose starvation, is required for the repression of rDNA transcription, and this function may be independent of H2A.Z. This is Actin-related protein 6 (ACTR6) from Homo sapiens (Human).